The chain runs to 380 residues: Putative zinc finger protein C02F5.12 (380 aa).

The interval 137 to 187 (NLDIPGTSSDIPSDPSSALKVPKKEVLDESEEILDQTSGSSSFSLNDSEQA) is disordered. 2 stretches are compositionally biased toward polar residues: residues 142-152 (GTSSDIPSDPS) and 171-187 (DQTS…SEQA). Residues 271-294 (IPCKLCGFECTNVRRMRSHYAKAH) form a C2H2-type zinc finger.

It localises to the nucleus. The protein is Putative zinc finger protein C02F5.12 of Caenorhabditis elegans.